Here is a 513-residue protein sequence, read N- to C-terminus: MTTITLTPGSVPLSSWRALWQGATPKLDPACRPTIAGSASAVARILSRGKPVYGINTGFGKLAAVRIPDDQLEMLQRNIVLSHAAGVGEPSPANIVRLMMALKMTNLGRGASGVRLETIDLMEAMLAADLLPLIPAQGSVGASGDLAPLAHMACAMIGVGDVFLKGERLSAASAFRKAGLTPLPALAAKEGLALLNGTQFSTACALAGLFEAERILQSALVTGALSTEAAKGSDAPFDPRIHELRGHRGQIDCADILRDLMAGSAIRASHLENDTRVQDPYCIRCQPQVAGAALTLLRQAADTLLTESNGVSDNPLIFPETDEALSGGNFHAEPVAFAADMIAMALCEIGSISERRIAMLVDPALSGMPAFLTPQPGLNSGFMIPQVTAAALVSENKQMAFPASVDSIPTSANQEDHVSMAAHGARRLLTMAKNVDYILGIELLAAAQACDFHAPLRSSDALEALRARIRQDVPPLDHDRLMHPDIEAATGLIRSGEAIRAVNRPLPALEAAP.

Positions alanine 142–glycine 144 form a cross-link, 5-imidazolinone (Ala-Gly). Serine 143 bears the 2,3-didehydroalanine (Ser) mark.

Belongs to the PAL/histidase family. Contains an active site 4-methylidene-imidazol-5-one (MIO), which is formed autocatalytically by cyclization and dehydration of residues Ala-Ser-Gly.

It is found in the cytoplasm. The enzyme catalyses L-histidine = trans-urocanate + NH4(+). The protein operates within amino-acid degradation; L-histidine degradation into L-glutamate; N-formimidoyl-L-glutamate from L-histidine: step 1/3. In Hyphomonas neptunium (strain ATCC 15444), this protein is Histidine ammonia-lyase.